The primary structure comprises 251 residues: Outer membrane protein assembly factor BamD (251 aa).

The signal sequence occupies residues 1–19 (MKLTKLLSALLVIGLVLGG). Cysteine 20 carries the N-palmitoyl cysteine lipid modification. Cysteine 20 carries S-diacylglycerol cysteine lipidation. 3 TPR repeats span residues 33-66 (IATLYNEGIILLDKKKYKKAAEEFGKIFYQHPGN), 70-103 (PQAELMQAYSLFLAAQYEEAVDILNMFINLHPAN), and 166-199 (AGKEMMIGRFYLKKKNPMAAINRFEEVIDNYQTT).

It belongs to the BamD family. As to quaternary structure, part of the Bam complex.

The protein resides in the cell outer membrane. In terms of biological role, part of the outer membrane protein assembly complex, which is involved in assembly and insertion of beta-barrel proteins into the outer membrane. In Rickettsia prowazekii (strain Madrid E), this protein is Outer membrane protein assembly factor BamD.